A 194-amino-acid polypeptide reads, in one-letter code: MMIVIGLTGSIGMGKTTTAKLFAEEGVPVLDSDEVVHGLYRAEAVPLIDAAFPGTTISGMVDRQKLGDVLRKNPANFNRLEEIVHPLVRNRQEAFLAKARIDDRAFALLDIPLLFETGAEGRVDKVVVVSCAPEIQRERVLSRPGMTEEKFEMILARQMPDAEKRQRADFVVDSGNGVEAARDQVKEILQKLGA.

In terms of domain architecture, DPCK spans 4–194; the sequence is VIGLTGSIGM…VKEILQKLGA (191 aa). An ATP-binding site is contributed by 12-17; sequence GMGKTT.

The protein belongs to the CoaE family.

It localises to the cytoplasm. The catalysed reaction is 3'-dephospho-CoA + ATP = ADP + CoA + H(+). The protein operates within cofactor biosynthesis; coenzyme A biosynthesis; CoA from (R)-pantothenate: step 5/5. Its function is as follows. Catalyzes the phosphorylation of the 3'-hydroxyl group of dephosphocoenzyme A to form coenzyme A. The protein is Dephospho-CoA kinase of Agrobacterium fabrum (strain C58 / ATCC 33970) (Agrobacterium tumefaciens (strain C58)).